We begin with the raw amino-acid sequence, 159 residues long: Nucleoside diphosphate kinase (159 aa).

6 residues coordinate ATP: K13, F61, R89, T95, R106, and N116. Residue H119 is the Pros-phosphohistidine intermediate of the active site.

It belongs to the NDK family. The cofactor is Mg(2+).

The protein localises to the cytoplasm. It catalyses the reaction a 2'-deoxyribonucleoside 5'-diphosphate + ATP = a 2'-deoxyribonucleoside 5'-triphosphate + ADP. The catalysed reaction is a ribonucleoside 5'-diphosphate + ATP = a ribonucleoside 5'-triphosphate + ADP. Functionally, major role in the synthesis of nucleoside triphosphates other than ATP. The ATP gamma phosphate is transferred to the NDP beta phosphate via a ping-pong mechanism, using a phosphorylated active-site intermediate. In Halorubrum lacusprofundi (strain ATCC 49239 / DSM 5036 / JCM 8891 / ACAM 34), this protein is Nucleoside diphosphate kinase.